Here is a 252-residue protein sequence, read N- to C-terminus: Probable phosphatase Shewana3_2794 (252 aa).

Zn(2+)-binding residues include His-8, His-10, His-16, His-41, Glu-74, His-102, His-132, Asp-193, and His-195.

Belongs to the PHP family. It depends on Zn(2+) as a cofactor.

This Shewanella sp. (strain ANA-3) protein is Probable phosphatase Shewana3_2794.